A 971-amino-acid polypeptide reads, in one-letter code: Exportin-2 (971 aa).

Methionine 1 is modified (N-acetylmethionine). The 74-residue stretch at 29 to 102 (AEKFLESVEG…KANIVHLMLS (74 aa)) folds into the Importin N-terminal domain. Serine 112 carries the phosphoserine modification. Lysine 574 and lysine 824 each carry N6-acetyllysine. Serine 931 is subject to Phosphoserine.

This sequence belongs to the XPO2/CSE1 family. As to quaternary structure, found in a complex with CSE1L/XPO2, Ran and KPNA2. Binds with high affinity to importin-alpha only in the presence of RanGTP. The complex is dissociated by the combined action of RanBP1 and RanGAP1. Interacts with CFTR.

The protein resides in the cytoplasm. It is found in the nucleus. In terms of biological role, export receptor for importin-alpha. Mediates importin-alpha re-export from the nucleus to the cytoplasm after import substrates (cargos) have been released into the nucleoplasm. In the nucleus binds cooperatively to importin-alpha and to the GTPase Ran in its active GTP-bound form. Docking of this trimeric complex to the nuclear pore complex (NPC) is mediated through binding to nucleoporins. Upon transit of a nuclear export complex into the cytoplasm, disassembling of the complex and hydrolysis of Ran-GTP to Ran-GDP (induced by RANBP1 and RANGAP1, respectively) cause release of the importin-alpha from the export receptor. CSE1L/XPO2 then return to the nuclear compartment and mediate another round of transport. The directionality of nuclear export is thought to be conferred by an asymmetric distribution of the GTP- and GDP-bound forms of Ran between the cytoplasm and nucleus. This chain is Exportin-2 (CSE1L), found in Pongo abelii (Sumatran orangutan).